The sequence spans 128 residues: Ribonuclease pancreatic (128 aa).

Residues 1-23 (AESSAMKFQRQHVDSEGSSSSNA) are disordered. Residues K7 and R10 each coordinate substrate. H12 acts as the Proton acceptor in catalysis. 4 disulfides stabilise this stretch: C26–C84, C40–C95, C58–C110, and C65–C72. Residues 41 to 45 (KPVNT), K66, and R85 contribute to the substrate site. Catalysis depends on H119, which acts as the Proton donor.

This sequence belongs to the pancreatic ribonuclease family. Monomer. Interacts with and forms tight 1:1 complexes with RNH1. Dimerization of two such complexes may occur. Interaction with RNH1 inhibits this protein. Pancreas.

It localises to the secreted. It carries out the reaction an [RNA] containing cytidine + H2O = an [RNA]-3'-cytidine-3'-phosphate + a 5'-hydroxy-ribonucleotide-3'-[RNA].. It catalyses the reaction an [RNA] containing uridine + H2O = an [RNA]-3'-uridine-3'-phosphate + a 5'-hydroxy-ribonucleotide-3'-[RNA].. Endonuclease that catalyzes the cleavage of RNA on the 3' side of pyrimidine nucleotides. Acts on single-stranded and double-stranded RNA. This chain is Ribonuclease pancreatic (RNASE1), found in Hydrochoerus hydrochaeris (Capybara).